The chain runs to 360 residues: Phenylalanine--tRNA ligase alpha subunit (360 aa).

Residue Glu255 coordinates Mg(2+).

It belongs to the class-II aminoacyl-tRNA synthetase family. Phe-tRNA synthetase alpha subunit type 1 subfamily. In terms of assembly, tetramer of two alpha and two beta subunits. The cofactor is Mg(2+).

The protein resides in the cytoplasm. The catalysed reaction is tRNA(Phe) + L-phenylalanine + ATP = L-phenylalanyl-tRNA(Phe) + AMP + diphosphate + H(+). This chain is Phenylalanine--tRNA ligase alpha subunit, found in Rhizorhabdus wittichii (strain DSM 6014 / CCUG 31198 / JCM 15750 / NBRC 105917 / EY 4224 / RW1) (Sphingomonas wittichii).